A 97-amino-acid chain; its full sequence is Cobalt transport protein CbiN (97 aa).

2 helical membrane passes run 6-26 (VLMI…YSGL) and 68-88 (SLLF…FFGY).

The protein belongs to the CbiN family. In terms of assembly, forms an energy-coupling factor (ECF) transporter complex composed of an ATP-binding protein (A component, CbiO), a transmembrane protein (T component, CbiQ) and 2 possible substrate-capture proteins (S components, CbiM and CbiN) of unknown stoichimetry.

Its subcellular location is the cell membrane. The protein operates within cofactor biosynthesis; adenosylcobalamin biosynthesis. Part of the energy-coupling factor (ECF) transporter complex CbiMNOQ involved in cobalt import. This is Cobalt transport protein CbiN from Methanococcus maripaludis (strain C5 / ATCC BAA-1333).